The sequence spans 449 residues: Ribosomal protein uS12 methylthiotransferase RimO (449 aa).

In terms of domain architecture, MTTase N-terminal spans 7–123; the sequence is QKVSMVSLGC…VAEILAEHHA (117 aa). 6 residues coordinate [4Fe-4S] cluster: cysteine 16, cysteine 52, cysteine 86, cysteine 161, cysteine 165, and cysteine 168. A Radical SAM core domain is found at 147-377; it reads SSPGWYAYLK…MKTQARVSFR (231 aa). A TRAM domain is found at 380–448; it reads RAMVGQTEQV…DYDLVAEMIE (69 aa).

The protein belongs to the methylthiotransferase family. RimO subfamily. [4Fe-4S] cluster serves as cofactor.

Its subcellular location is the cytoplasm. It carries out the reaction L-aspartate(89)-[ribosomal protein uS12]-hydrogen + (sulfur carrier)-SH + AH2 + 2 S-adenosyl-L-methionine = 3-methylsulfanyl-L-aspartate(89)-[ribosomal protein uS12]-hydrogen + (sulfur carrier)-H + 5'-deoxyadenosine + L-methionine + A + S-adenosyl-L-homocysteine + 2 H(+). In terms of biological role, catalyzes the methylthiolation of an aspartic acid residue of ribosomal protein uS12. This chain is Ribosomal protein uS12 methylthiotransferase RimO, found in Trichlorobacter lovleyi (strain ATCC BAA-1151 / DSM 17278 / SZ) (Geobacter lovleyi).